Here is a 555-residue protein sequence, read N- to C-terminus: GPI-anchor transamidase component PIGS (555 aa).

At 2 to 18 (AAAGAAATDLEVVRGKR) the chain is on the cytoplasmic side. Positions 15 and 18 each coordinate a cardiolipin. A helical membrane pass occupies residues 19–39 (SALFFAAVAILLGLPLWWKTT). Over 40-517 (ETYRAPLPYS…LHLLYFPDDQ (478 aa)) the chain is Lumenal. Asn267 and Asn370 each carry an N-linked (GlcNAc...) asparagine glycan. The helical transmembrane segment at 518–532 (KFAIYIPLFLPMAVP) threads the bilayer. Residues 533–555 (ILLSLVKIFQETRKSWKKPEKID) are Cytoplasmic-facing.

It belongs to the PIGS family. In terms of assembly, heteropentamer. Part of the GPI-anchor transamidase complex, consisting of PIGK, PIGT, PIGS, PIGU and GAA1.

It localises to the endoplasmic reticulum membrane. It functions in the pathway glycolipid biosynthesis; glycosylphosphatidylinositol-anchor biosynthesis. Functionally, component of the glycosylphosphatidylinositol-anchor (GPI-anchor) transamidase (GPI-T) complex that catalyzes the formation of the linkage between a proprotein and a GPI-anchor and participates in GPI anchored protein biosynthesis. This is GPI-anchor transamidase component PIGS from Mus musculus (Mouse).